Here is a 55-residue protein sequence, read N- to C-terminus: Transcriptional regulator CdrS (55 aa).

It belongs to the CdrS family.

The protein localises to the cytoplasm. Functionally, transcriptional regulator which plays a central role in the regulation of cell division. Activates the expression of the gene encoding the cell division protein FtsZ2, and of other genes encoding proteins predicted to function in critical aspects of cell division. Required for normal cell division but not for cell elongation. May act during the transition from stasis to growth. The CdrSL-FtsZ2 transcriptional network might coordinate cell division timing with cell growth. The polypeptide is Transcriptional regulator CdrS (Halobacterium salinarum (strain ATCC 700922 / JCM 11081 / NRC-1) (Halobacterium halobium)).